We begin with the raw amino-acid sequence, 35 residues long: U1-theraphotoxin-Hs1f (35 aa).

3 disulfides stabilise this stretch: C3-C16, C7-C27, and C21-C32.

It belongs to the neurotoxin 12 (Hwtx-2) family. 02 (Hwtx-2) subfamily. Expressed by the venom gland.

It is found in the secreted. Blocks neuromuscular transmission. Acts cooperatively to potentiate the activity of huwentoxin-I. Paralyzes locusts and kills mice following intracerebroventricular injection. This Cyriopagopus schmidti (Chinese bird spider) protein is U1-theraphotoxin-Hs1f.